The following is a 370-amino-acid chain: Ubiquitin-binding protein Rv1468c (370 aa).

The UBA stretch occupies residues Met-1–Phe-72. The PE domain occupies Met-1–Thr-93.

Belongs to the mycobacterial PE family. PGRS subfamily. In terms of assembly, interacts directly with host polyubiquitin in a UBA-dependent manner.

It is found in the secreted. The protein localises to the cell wall. The protein resides in the cell surface. Its function is as follows. Mediates direct binding of host ubiquitin (Ub) to the mycobacterial surface, which triggers host xenophagy. Interaction between Rv1468c and ubiquitin recruits autophagy receptor p62 to deliver mycobacteria into LC3-associated autophagosomes. It could be a viable evolutionary strategy adopted by M.tuberculosis to maintain long-term intracellular survival through self-controlling its intracellular bacterial loads to avoid excessive host inflammatory immune responses. This Mycobacterium tuberculosis (strain ATCC 25618 / H37Rv) protein is Ubiquitin-binding protein Rv1468c.